We begin with the raw amino-acid sequence, 382 residues long: Protein phosphatase 1A (382 aa).

A lipid anchor (N-myristoyl glycine) is attached at Gly-2. In terms of domain architecture, PPM-type phosphatase spans 23–291 (RYGLSSMQGW…DNMSVILICF (269 aa)). Residues Asp-60, Gly-61, Asp-239, and Asp-282 each contribute to the Mn(2+) site. Residues Ser-375 and Ser-377 each carry the phosphoserine modification.

Belongs to the PP2C family. Monomer. Interacts with SMAD2; the interaction dephosphorylates SMAD2 in its C-terminal SXS motif resulting in disruption of the SMAD2/SMAD4 complex, SMAD2 nuclear export and termination of the TGF-beta-mediated signaling. Interacts with SMAD2; the interaction dephosphorylates SMAD2 in its C-terminal SXS motif resulting in disruption of the SMAD2/SMAD4 complex, SMAD2 nuclear export and termination of the TGF-beta-mediated signaling. Interacts with the phosphorylated form of IKBKB/IKKB. Requires Mg(2+) as cofactor. Mn(2+) is required as a cofactor. In terms of processing, N-myristoylation is essential for the recognition of its substrates for dephosphorylation.

Its subcellular location is the nucleus. The protein localises to the cytoplasm. The protein resides in the cytosol. It localises to the membrane. It catalyses the reaction O-phospho-L-seryl-[protein] + H2O = L-seryl-[protein] + phosphate. The enzyme catalyses O-phospho-L-threonyl-[protein] + H2O = L-threonyl-[protein] + phosphate. Its function is as follows. Enzyme with a broad specificity. Negatively regulates TGF-beta signaling through dephosphorylating SMAD2 and SMAD3, resulting in their dissociation from SMAD4, nuclear export of the SMADs and termination of the TGF-beta-mediated signaling. Dephosphorylates PRKAA1 and PRKAA2. Plays an important role in the termination of TNF-alpha-mediated NF-kappa-B activation through dephosphorylating and inactivating IKBKB/IKKB. The sequence is that of Protein phosphatase 1A (PPM1A) from Oryctolagus cuniculus (Rabbit).